We begin with the raw amino-acid sequence, 234 residues long: UPF0173 metal-dependent hydrolase RHECIAT_CH0001941 (234 aa).

Belongs to the UPF0173 family.

This chain is UPF0173 metal-dependent hydrolase RHECIAT_CH0001941, found in Rhizobium etli (strain CIAT 652).